The sequence spans 319 residues: Vesicle-associated membrane protein-associated protein scs22 (319 aa).

One can recognise an MSP domain in the interval 1-121 (MALECDSTIV…SERKIRCVYS (121 aa)). Over 1–298 (MALECDSTIV…GAKVVPQIHN (298 aa)) the chain is Cytoplasmic. Residues 127–150 (ANAHANAHHQPAQTTTTSIPTSAT) are compositionally biased toward low complexity. The disordered stretch occupies residues 127–244 (ANAHANAHHQ…TTSPNNENNA (118 aa)). Composition is skewed to polar residues over residues 151–165 (DNYT…QSYS), 185–201 (STAT…SAVS), and 231–244 (SVPT…ENNA). Thr-236 carries the phosphothreonine modification. Phosphoserine occurs at positions 237 and 281. The chain crosses the membrane as a helical; Anchor for type IV membrane protein span at residues 299-319 (TVTVQTAFLLAIICFLIGLLF).

Belongs to the VAMP-associated protein (VAP) (TC 9.B.17) family. In terms of assembly, interacts with epr1.

It is found in the endoplasmic reticulum membrane. Functionally, vesicle-associated membrane protein-associated protein (VAP) implicated in maintaining the cortical endoplasmic reticulum (ER)-plasma membrane (PM) attachment. ER-PM contacts function to modulate the distribution of contractile ring components to ensure robust ring assembly. ER-PM contacts function also in controlling exocytosis and maintenance of cell polarity regulating cell shape. VAPs play an important role in regulating eisosome assembly. VAPs also contribute to ER-phagy by tethering atg8 to the ER membrane, but also by maintaining the ER-plasma membrane contact. In Schizosaccharomyces pombe (strain 972 / ATCC 24843) (Fission yeast), this protein is Vesicle-associated membrane protein-associated protein scs22 (scs22).